The chain runs to 115 residues: Protein Diedel (115 aa).

A signal peptide spans 1–24; it reads MASPVVSLLLVGICALAFVHVARS. Cystine bridges form between cysteine 26-cysteine 81, cysteine 27-cysteine 87, cysteine 42-cysteine 55, cysteine 60-cysteine 71, and cysteine 76-cysteine 83.

The protein belongs to the Diedel family. As to expression, detected in hemolymph (at protein level). Also expressed in the fat body and is probably synthesized in the fat body and secreted into the hemolymph.

It is found in the secreted. Cytokine which promotes survival following infection by Sindbis virus by suppressing the immune deficiency pathway. Following infection by the enteropathogenic bacteria E.carotovora limits intestinal stem cells proliferation. When secreted from muscle or adipose tissue, can attenuate age-related intestinal tissue degeneration by inhibiting apoptosis. The sequence is that of Protein Diedel from Drosophila melanogaster (Fruit fly).